The chain runs to 155 residues: Perlucin (155 aa).

3 disulfides stabilise this stretch: Cys-2–Cys-13, Cys-30–Cys-127, and Cys-102–Cys-119. Residues 9 to 128 (NRRSCYWFST…CQKPSHFICE (120 aa)) enclose the C-type lectin domain. N-linked (GlcNAc...) asparagine glycosylation is present at Asn-84. 2 repeat units span residues 136-145 (NSLHANLQQR) and 146-155 (DSLHANLQQR).

In terms of processing, glycosylated.

Functionally, may promote nucleation and/or growth of calcium carbonate crystals. Binds to D-galactose and D-mannose/D-glucose. In Haliotis laevigata (Smooth Australian abalone), this protein is Perlucin.